A 294-amino-acid polypeptide reads, in one-letter code: tRNA dimethylallyltransferase (294 aa).

Position 10-17 (10-17) interacts with ATP; the sequence is GPTAVGKT. Residue 12 to 17 coordinates substrate; sequence TAVGKT. Positions 35 to 38 are interaction with substrate tRNA; that stretch reads DSQQ.

Belongs to the IPP transferase family. In terms of assembly, monomer. Mg(2+) is required as a cofactor.

It catalyses the reaction adenosine(37) in tRNA + dimethylallyl diphosphate = N(6)-dimethylallyladenosine(37) in tRNA + diphosphate. Catalyzes the transfer of a dimethylallyl group onto the adenine at position 37 in tRNAs that read codons beginning with uridine, leading to the formation of N6-(dimethylallyl)adenosine (i(6)A). The polypeptide is tRNA dimethylallyltransferase (Streptococcus sanguinis (strain SK36)).